The following is a 249-amino-acid chain: Aquaporin SIP2-1 (249 aa).

2 consecutive transmembrane segments (helical) span residues 12–32 (PWLV…GALV) and 53–73 (VSLS…SGGA). The NPA 1 signature appears at 76–78 (NPL). A run of 4 helical transmembrane segments spans residues 104 to 124 (AQVI…PNVG), 133 to 155 (AHHG…VTLK), 176 to 196 (IHLL…AFAW), and 210 to 230 (LVYW…VTFF). The NPA 2 signature appears at 189 to 191 (NPA).

It belongs to the MIP/aquaporin (TC 1.A.8) family. SIP (TC 1.A.8.10) subfamily.

It is found in the membrane. Its function is as follows. Aquaporins facilitate the transport of water and small neutral solutes across cell membranes. The polypeptide is Aquaporin SIP2-1 (SIP2-1) (Zea mays (Maize)).